Reading from the N-terminus, the 223-residue chain is MINNEDFLDEIGDSHFSSNAKNPLREDAFDITDEEKIEKIKKDVENILQTLGMDLTDDSIKGTPNRVAKMFVKEIFGGLNPAKQPKASTFDNNYKYGEMLVEKNITVYSTCEHHLLPIIGRAHVAYISSGRVIGLSKMNRIVEYYAKRPQVQERLTMQIVQELQKALGTEDVACVIDAKHLCVNSRGIKDIESSTVTSEFGGKFKDPQTKREFLDYIKLDTQF.

Residues Cys111, His114, and Cys182 each contribute to the Zn(2+) site.

This sequence belongs to the GTP cyclohydrolase I family. As to quaternary structure, homomer.

The enzyme catalyses GTP + H2O = 7,8-dihydroneopterin 3'-triphosphate + formate + H(+). Its pathway is cofactor biosynthesis; 7,8-dihydroneopterin triphosphate biosynthesis; 7,8-dihydroneopterin triphosphate from GTP: step 1/1. This is GTP cyclohydrolase 1 from Flavobacterium johnsoniae (strain ATCC 17061 / DSM 2064 / JCM 8514 / BCRC 14874 / CCUG 350202 / NBRC 14942 / NCIMB 11054 / UW101) (Cytophaga johnsonae).